A 315-amino-acid polypeptide reads, in one-letter code: MARRTKGRNIDGIVLLDKPTGMSSNHALQRVKRIYNASKAGHTGALDPLATGMLPVCLGEATKFSQHLLDADKRYLVTAKLGQRTDTSDSDGEVVSERPLNFTQEALDAALDSFRGDTLQVPSMFSALKYQGQPLYKYAREGKEVPREARPITVFELNFIKLEGDELTLDIHCSKGTYIRTIIDDLGEKLGCGAHVIMLRRTAVAGYPYERMVTIEALEALLEQAEKEGVEPKTLLDPLLLPMDTAVANFPEVNIPDAVAPYLMNGNPVRVAGVSSDSLLRITLGEARRFVGVGAINDDGLLAPKRLVVFYDDEA.

Asp-47 serves as the catalytic Nucleophile.

The protein belongs to the pseudouridine synthase TruB family. Type 1 subfamily.

The catalysed reaction is uridine(55) in tRNA = pseudouridine(55) in tRNA. Functionally, responsible for synthesis of pseudouridine from uracil-55 in the psi GC loop of transfer RNAs. The protein is tRNA pseudouridine synthase B of Shewanella amazonensis (strain ATCC BAA-1098 / SB2B).